The primary structure comprises 146 residues: Snake venom vascular endothelial growth factor toxin (146 aa).

A signal peptide spans 1–24 (MAAYLLAVAILFCIQGWPLGTVQG). The residue at position 25 (glutamine 25) is a Pyrrolidone carboxylic acid. Intrachain disulfides connect cysteine 38–cysteine 80, cysteine 69–cysteine 115, and cysteine 73–cysteine 117. The tract at residues 119–146 (PRSASGVNSRKHKRNPEEGEPRAKFPFV) is disordered. The segment covering 133-146 (NPEEGEPRAKFPFV) has biased composition (basic and acidic residues).

It belongs to the PDGF/VEGF growth factor family. Snake venom VEGF subfamily. Homodimer; disulfide-linked. Interacts with VEGF receptor-1 (FLT1) with a high affinity, whereas it binds to VEGF receptor-2 (KDR) with a low affinity. Does not bind VEGF receptor-3 (FLT4). As to expression, expressed by the venom gland.

It localises to the secreted. Its function is as follows. Snake venom VEGFs may contribute to venom dispersion and prey subjugation by inducing vascular permeability and hypotension. This protein induces vascular permeability probably through VEGF (VEGFR) signaling. This protein also induces a drastic hypotensive effect after intravenous injection. The hypotension is mediated by nitric oxide (NO), which is produced by VEGF-activated endothelium NO synthase. Also induces angiogenesis in vitro. Like other crotalid VEGFs, this protein interacts with VEGF receptor-1 (FLT1) with a high affinity, whereas it binds to VEGF receptor-2 (KDR) with a low affinity. This is Snake venom vascular endothelial growth factor toxin from Bothrops insularis (Golden lancehead).